Here is a 404-residue protein sequence, read N- to C-terminus: Argininosuccinate synthase (404 aa).

ATP-binding positions include 12-20 (AYSGGLDTS) and Ala-40. 2 residues coordinate L-citrulline: Tyr-92 and Ser-97. Gly-122 serves as a coordination point for ATP. Residues Thr-124, Asn-128, and Asp-129 each coordinate L-aspartate. Asn-128 is a binding site for L-citrulline. 5 residues coordinate L-citrulline: Arg-132, Ser-181, Ser-190, Glu-266, and Tyr-278.

It belongs to the argininosuccinate synthase family. Type 1 subfamily. As to quaternary structure, homotetramer.

Its subcellular location is the cytoplasm. The catalysed reaction is L-citrulline + L-aspartate + ATP = 2-(N(omega)-L-arginino)succinate + AMP + diphosphate + H(+). It functions in the pathway amino-acid biosynthesis; L-arginine biosynthesis; L-arginine from L-ornithine and carbamoyl phosphate: step 2/3. This Erwinia tasmaniensis (strain DSM 17950 / CFBP 7177 / CIP 109463 / NCPPB 4357 / Et1/99) protein is Argininosuccinate synthase.